The primary structure comprises 270 residues: Elongation factor Ts (270 aa).

An involved in Mg(2+) ion dislocation from EF-Tu region spans residues 81 to 84 (TDFV).

It belongs to the EF-Ts family.

The protein localises to the cytoplasm. Associates with the EF-Tu.GDP complex and induces the exchange of GDP to GTP. It remains bound to the aminoacyl-tRNA.EF-Tu.GTP complex up to the GTP hydrolysis stage on the ribosome. This chain is Elongation factor Ts, found in Wigglesworthia glossinidia brevipalpis.